The following is a 389-amino-acid chain: 8-amino-7-oxononanoate synthase (389 aa).

Residue R31 participates in substrate binding. 109–110 contributes to the pyridoxal 5'-phosphate binding site; sequence GY. H134 lines the substrate pocket. Pyridoxal 5'-phosphate-binding positions include S180, 205 to 208, and 236 to 239; these read DEAH and TLSK. K239 is subject to N6-(pyridoxal phosphate)lysine. Residue T349 participates in substrate binding.

It belongs to the class-II pyridoxal-phosphate-dependent aminotransferase family. BioF subfamily. In terms of assembly, homodimer. Requires pyridoxal 5'-phosphate as cofactor.

The enzyme catalyses 6-carboxyhexanoyl-[ACP] + L-alanine + H(+) = (8S)-8-amino-7-oxononanoate + holo-[ACP] + CO2. Its pathway is cofactor biosynthesis; biotin biosynthesis. Catalyzes the decarboxylative condensation of pimeloyl-[acyl-carrier protein] and L-alanine to produce 8-amino-7-oxononanoate (AON), [acyl-carrier protein], and carbon dioxide. The protein is 8-amino-7-oxononanoate synthase of Mycobacterium ulcerans (strain Agy99).